An 876-amino-acid polypeptide reads, in one-letter code: Leucine--tRNA ligase (876 aa).

Positions 43 to 53 match the 'HIGH' region motif; that stretch reads PYPSGRIHMGH. A 'KMSKS' region motif is present at residues 632–636; it reads KMSKS. Residue K635 participates in ATP binding.

Belongs to the class-I aminoacyl-tRNA synthetase family.

It is found in the cytoplasm. It catalyses the reaction tRNA(Leu) + L-leucine + ATP = L-leucyl-tRNA(Leu) + AMP + diphosphate. The sequence is that of Leucine--tRNA ligase from Rhizobium etli (strain ATCC 51251 / DSM 11541 / JCM 21823 / NBRC 15573 / CFN 42).